Reading from the N-terminus, the 260-residue chain is NAD-capped RNA hydrolase NudC (260 aa).

Arginine 74 contributes to the substrate binding site. Residues cysteine 103, cysteine 106, cysteine 121, and cysteine 124 each coordinate Zn(2+). Tyrosine 129 serves as a coordination point for substrate. The 124-residue stretch at 130–253 (PRIFPCIIVA…TIARALIEQT (124 aa)) folds into the Nudix hydrolase domain. A divalent metal cation is bound by residues alanine 163, glutamate 179, and glutamate 183. The Nudix box signature appears at 164–185 (GFLEAGETLEDCVAREVHEETG). 197–204 (QPWAFPSS) is a binding site for substrate. Residue glutamate 224 coordinates a divalent metal cation. Position 246 (alanine 246) interacts with substrate.

This sequence belongs to the Nudix hydrolase family. NudC subfamily. Homodimer. Mg(2+) is required as a cofactor. The cofactor is Mn(2+). Requires Zn(2+) as cofactor.

It catalyses the reaction a 5'-end NAD(+)-phospho-ribonucleoside in mRNA + H2O = a 5'-end phospho-adenosine-phospho-ribonucleoside in mRNA + beta-nicotinamide D-ribonucleotide + 2 H(+). The enzyme catalyses NAD(+) + H2O = beta-nicotinamide D-ribonucleotide + AMP + 2 H(+). It carries out the reaction NADH + H2O = reduced beta-nicotinamide D-ribonucleotide + AMP + 2 H(+). In terms of biological role, mRNA decapping enzyme that specifically removes the nicotinamide adenine dinucleotide (NAD) cap from a subset of mRNAs by hydrolyzing the diphosphate linkage to produce nicotinamide mononucleotide (NMN) and 5' monophosphate mRNA. The NAD-cap is present at the 5'-end of some mRNAs and stabilizes RNA against 5'-processing. Has preference for mRNAs with a 5'-end purine. Catalyzes the hydrolysis of a broad range of dinucleotide pyrophosphates. The sequence is that of NAD-capped RNA hydrolase NudC from Vibrio parahaemolyticus serotype O3:K6 (strain RIMD 2210633).